A 244-amino-acid polypeptide reads, in one-letter code: Gamma-gliadin (244 aa).

The segment at 18 to 64 (QQPFLQQPQQPSPQPQQVVQIISPATPTTIPSAGKPTSAPFPQQQQQ) is disordered. A compositionally biased stretch (polar residues) spans 35 to 48 (VVQIISPATPTTIP).

Belongs to the gliadin/glutenin family.

In terms of biological role, gliadin is the major seed storage protein in wheat. This chain is Gamma-gliadin, found in Triticum aestivum (Wheat).